The following is a 222-amino-acid chain: Gamma-glutamyl cyclotransferase gliK (222 aa).

The next 2 helical transmembrane spans lie at 154–174 (GWWFQLGVALFLWPWTRAAII) and 187–207 (GHVPAWFLFIFDCLLWLMWAQ).

This sequence belongs to the class-I pyridoxal-phosphate-dependent aminotransferase family.

The protein localises to the membrane. It carries out the reaction an alpha-(gamma-L-glutamyl)-L-amino acid = 5-oxo-L-proline + an L-alpha-amino acid. It participates in secondary metabolite biosynthesis. Its function is as follows. Gamma-glutamyl cyclotransferase; part of the gene cluster that mediates the biosynthesis of an unusual class of epipolythiodioxopiperazines (ETPs) lacking the reactive thiol group important for toxicity. Firstly, L-tyrosine is prenylated by tcpD, before undergoing condensation with L-glycine in a reaction catalyzed by the NRPS tcpP leading to the diketopiperazine (DKP) backbone. Afterwards the alpha-carbon of tyrosine is oxidized by the cytochrome P450 tcpC to form a hydroxyl group. However, in contrast other ETP biosynthesis pathways studied so far, tcpC is not able to bishydroxylate the DKP at both alpha-carbon positions, but hydroxylates the alpha-carbon of the tyrosine part and the nitrogen of the glycine part. The next steps involve an alpha,beta-elimination reaction catalyzed by tcpI, a methylation by the methyltransferase tcpN the action of the four enzyme cascade tcpG/K/J/I. Due to a dysfunctional cytochrome P450 monooxygenase tcpC, the pathway leads to the biosynthesis of probable non-toxic metabolites lacking the reactive thiol group. The sequence is that of Gamma-glutamyl cyclotransferase gliK from Claviceps purpurea (strain 20.1) (Ergot fungus).